Reading from the N-terminus, the 325-residue chain is tRNA dimethylallyltransferase (325 aa).

Residue 11-18 (GPTASGKS) participates in ATP binding. 13-18 (TASGKS) is a binding site for substrate. 2 interaction with substrate tRNA regions span residues 36–39 (DSMQ) and 160–164 (QRLIR).

This sequence belongs to the IPP transferase family. Monomer. It depends on Mg(2+) as a cofactor.

It carries out the reaction adenosine(37) in tRNA + dimethylallyl diphosphate = N(6)-dimethylallyladenosine(37) in tRNA + diphosphate. Catalyzes the transfer of a dimethylallyl group onto the adenine at position 37 in tRNAs that read codons beginning with uridine, leading to the formation of N6-(dimethylallyl)adenosine (i(6)A). This Rickettsia canadensis (strain McKiel) protein is tRNA dimethylallyltransferase.